A 125-amino-acid polypeptide reads, in one-letter code: Small ribosomal subunit protein uS12 (125 aa).

3-methylthioaspartic acid is present on Asp-89. Residues 106-125 (GVKDRKQSRSKYGAKRPKKA) form a disordered region. Basic residues predominate over residues 113–125 (SRSKYGAKRPKKA).

It belongs to the universal ribosomal protein uS12 family. As to quaternary structure, part of the 30S ribosomal subunit. Contacts proteins S8 and S17. May interact with IF1 in the 30S initiation complex.

With S4 and S5 plays an important role in translational accuracy. Its function is as follows. Interacts with and stabilizes bases of the 16S rRNA that are involved in tRNA selection in the A site and with the mRNA backbone. Located at the interface of the 30S and 50S subunits, it traverses the body of the 30S subunit contacting proteins on the other side and probably holding the rRNA structure together. The combined cluster of proteins S8, S12 and S17 appears to hold together the shoulder and platform of the 30S subunit. The sequence is that of Small ribosomal subunit protein uS12 from Azoarcus sp. (strain BH72).